The sequence spans 189 residues: MTNEDVGTNSVADRLQLGPREGVTYPIQMKYCGHCTMPIEYCEYYPEYEKCKEWLELHMPDDFERLKIEEEAAAADGTDDDKKRQKRGGKGLLRVKKKEDVPKRICVSRAARGKKKSVTVVTGLSTFDIDLKVAAKFFGTKFACGSSVTGDDEIVIQGDVKDDLFDVIPEKWAEIDEDVIEDLGDQKRT.

The SUI1 domain occupies 105 to 172 (ICVSRAARGK…DLFDVIPEKW (68 aa)).

Belongs to the DENR family. In terms of assembly, interacts with MCTS1.

Regulates translation as part of a complex with MCTS1. Specifically required for translational re-initiation in mRNAs containing upstream open reading frames (uORFs). Not required for standard translational initiation. Regulates expression of a subset of gene products including mbc, InR and EcR. The protein is Density-regulated protein homolog of Drosophila melanogaster (Fruit fly).